A 140-amino-acid polypeptide reads, in one-letter code: Transcription antitermination protein NusB (140 aa).

The protein belongs to the NusB family.

Its function is as follows. Involved in transcription antitermination. Required for transcription of ribosomal RNA (rRNA) genes. Binds specifically to the boxA antiterminator sequence of the ribosomal RNA (rrn) operons. This is Transcription antitermination protein NusB from Thermoanaerobacter pseudethanolicus (strain ATCC 33223 / 39E) (Clostridium thermohydrosulfuricum).